The sequence spans 69 residues: Metallothionein-like protein CRS5 (69 aa).

Belongs to the metallothionein superfamily. Type 13 family.

Critical role in copper (specific) homeostasis and detoxification. May protect by directly chelating and sequestering copper ions. The chain is Metallothionein-like protein CRS5 (CRS5) from Saccharomyces cerevisiae (strain RM11-1a) (Baker's yeast).